A 541-amino-acid polypeptide reads, in one-letter code: Zinc finger protein 329 (541 aa).

The residue at position 50 (Ser-50) is a Phosphoserine. C2H2-type zinc fingers lie at residues 203–225 (YRCT…HRTH), 231–253 (YTCN…QRIH), 259–281 (YECS…QRIH), 287–309 (YECL…QRTH), 315–337 (YRCN…LRIH), 343–365 (YECS…ERTH), 371–393 (FECA…QKIH), 399–421 (YECK…QRIH), 427–449 (YGCN…QRTH), 455–477 (YECN…QRIH), 483–505 (YQCP…QRLH), and 511–533 (SRCP…QRAH).

Belongs to the krueppel C2H2-type zinc-finger protein family.

It localises to the nucleus. Its function is as follows. May be involved in transcriptional regulation. The protein is Zinc finger protein 329 (ZNF329) of Homo sapiens (Human).